The primary structure comprises 86 residues: Putative regulatory protein OB1501 (86 aa).

It belongs to the RemA family.

The sequence is that of Putative regulatory protein OB1501 from Oceanobacillus iheyensis (strain DSM 14371 / CIP 107618 / JCM 11309 / KCTC 3954 / HTE831).